Consider the following 260-residue polypeptide: Phosphatidylglycerol--prolipoprotein diacylglyceryl transferase (260 aa).

The next 4 helical transmembrane spans lie at 17–37 (VVKWYGIMMALGVVALVSWIF), 52–72 (LTAAIIAIPSGIVFAKLLHVI), 85–105 (IFSGEGLTIFGAIIGATIGLW), and 113–133 (FNLGYLLDVAVPGILLGQAIG). Arg-134 contacts a 1,2-diacyl-sn-glycero-3-phospho-(1'-sn-glycerol). 3 consecutive transmembrane segments (helical) span residues 170-190 (APTQAYEIIFLLCLLTFSLFI), 198-218 (GQLFLLYISLYAAWRVAIGFV), and 227-247 (GLEQAQVVGLILMAVAVPLFI).

The protein belongs to the Lgt family.

It is found in the cell membrane. The enzyme catalyses L-cysteinyl-[prolipoprotein] + a 1,2-diacyl-sn-glycero-3-phospho-(1'-sn-glycerol) = an S-1,2-diacyl-sn-glyceryl-L-cysteinyl-[prolipoprotein] + sn-glycerol 1-phosphate + H(+). It participates in protein modification; lipoprotein biosynthesis (diacylglyceryl transfer). Functionally, catalyzes the transfer of the diacylglyceryl group from phosphatidylglycerol to the sulfhydryl group of the N-terminal cysteine of a prolipoprotein, the first step in the formation of mature lipoproteins. The protein is Phosphatidylglycerol--prolipoprotein diacylglyceryl transferase of Dehalococcoides mccartyi (strain ATCC BAA-2100 / JCM 16839 / KCTC 5957 / BAV1).